The sequence spans 224 residues: MLYIVGTPIGNLEDITYRAVDVLKSVNVIFAEDTRVTIKLLSRYKINKKMISCNAVTENKKIRLLLDYLAKGDSVAFVSDAGTPGLSDPGSLLVAAAFREGYKVCPIPGVSSFNTIVSVNPFRDKSVLFEGFLPNKGLKRFKKIAELYKRGDAFVLLESGHRLLKLLVEISSVSLDAKILIGREMTKIYEEYQIGKPLELKKYFESSKEKVKGEFTILVSRSSS.

It belongs to the methyltransferase superfamily. RsmI family.

It is found in the cytoplasm. The catalysed reaction is cytidine(1402) in 16S rRNA + S-adenosyl-L-methionine = 2'-O-methylcytidine(1402) in 16S rRNA + S-adenosyl-L-homocysteine + H(+). Its function is as follows. Catalyzes the 2'-O-methylation of the ribose of cytidine 1402 (C1402) in 16S rRNA. The polypeptide is Ribosomal RNA small subunit methyltransferase I (Borrelia garinii subsp. bavariensis (strain ATCC BAA-2496 / DSM 23469 / PBi) (Borreliella bavariensis)).